A 265-amino-acid chain; its full sequence is Phosphatidylglycerol--prolipoprotein diacylglyceryl transferase (265 aa).

A run of 4 helical transmembrane segments spans residues 17 to 37, 56 to 76, 92 to 112, and 117 to 137; these read LSIRWYGLMYLIGFAAAWLLG, LVTYMVLGVVVGGRLGYMLFY, WQGGMSFHGGFLGVLAVVWFF, and GKGFWGVADFTAPLAPFGLFA. A 1,2-diacyl-sn-glycero-3-phospho-(1'-sn-glycerol) is bound at residue arginine 139. Helical transmembrane passes span 173-193, 201-221, and 235-255; these read PSQLYEALLEGAALFLIVWLY, GAVSGVFCVCYGLFRFAVELV, and WLTMGQLLSLPVIVFGLWLLA.

The protein belongs to the Lgt family.

It is found in the cell inner membrane. The enzyme catalyses L-cysteinyl-[prolipoprotein] + a 1,2-diacyl-sn-glycero-3-phospho-(1'-sn-glycerol) = an S-1,2-diacyl-sn-glyceryl-L-cysteinyl-[prolipoprotein] + sn-glycerol 1-phosphate + H(+). The protein operates within protein modification; lipoprotein biosynthesis (diacylglyceryl transfer). Functionally, catalyzes the transfer of the diacylglyceryl group from phosphatidylglycerol to the sulfhydryl group of the N-terminal cysteine of a prolipoprotein, the first step in the formation of mature lipoproteins. The sequence is that of Phosphatidylglycerol--prolipoprotein diacylglyceryl transferase from Solidesulfovibrio magneticus (strain ATCC 700980 / DSM 13731 / RS-1) (Desulfovibrio magneticus).